Reading from the N-terminus, the 612-residue chain is MAKVIGIDLGTTNSVVAVMDGSEPTVLENREGDRTTPSVVAFTKTGERLVGKVAKRQAITNPDRTIISIKRHMGSDYKVRIDDKAYTPQEISAMILSKLKADAEEKLGEKITQAVITVPAYFTDAQRQATKDAGTIAGLEVLRIINEPTAAALAYGLDKGEDQRILVFDLGGGTFDVSILELGGGTFQVIATAGNNKLGGDDFDERIVNYLADRFQREHGIDLRKDKQALQRLREAAEKAKIELSSVTTTNINLPFISMTADGPVHMDETLTRAKFEELTADLVEATMGPTRQALQDAGLEPGEIDKVLLVGGSTRIPAVQEAVRRFFGKEPYKGINPDEVVAMGAAIQAAVIKGDVKDVLLLDVTPLSLGIETLGGVFTKLIERNTTIPTRKSQIFSTAADGQTQVEIHVLQGEREMAAYNKTLGRFILDGIPPAPRGVPKIEVTFDIDVNGIVHVSAKDLGTGKEQKITIQSQTSMSKEEIERAIKEAEAMAAEDKKRREEAEIRNNADAAVYNAEKLIKESEGKGIDPSLIDAVKGAIEPVKEALKGTDVNAVKQATEKLTEAVYKLSSAIYEKTGSAGTGAGSQAGSAAGSGDGQSMDAEFKVKDEDK.

T174 is modified (phosphothreonine; by autocatalysis). The interval 579 to 612 (GSAGTGAGSQAGSAAGSGDGQSMDAEFKVKDEDK) is disordered. Over residues 581–597 (AGTGAGSQAGSAAGSGD) the composition is skewed to gly residues. The span at 603 to 612 (AEFKVKDEDK) shows a compositional bias: basic and acidic residues.

This sequence belongs to the heat shock protein 70 family.

Functionally, acts as a chaperone. This Symbiobacterium thermophilum (strain DSM 24528 / JCM 14929 / IAM 14863 / T) protein is Chaperone protein DnaK.